Reading from the N-terminus, the 953-residue chain is Isoleucine--tRNA ligase (953 aa).

The 'HIGH' region signature appears at 57-67; that stretch reads PYANGDIHIGH. Glu582 is a binding site for L-isoleucyl-5'-AMP. A 'KMSKS' region motif is present at residues 623-627; sequence KMSKS. Position 626 (Lys626) interacts with ATP. Zn(2+) is bound by residues Cys916, Cys919, Cys936, and Cys939.

The protein belongs to the class-I aminoacyl-tRNA synthetase family. IleS type 1 subfamily. Monomer. Zn(2+) serves as cofactor.

Its subcellular location is the cytoplasm. It carries out the reaction tRNA(Ile) + L-isoleucine + ATP = L-isoleucyl-tRNA(Ile) + AMP + diphosphate. Catalyzes the attachment of isoleucine to tRNA(Ile). As IleRS can inadvertently accommodate and process structurally similar amino acids such as valine, to avoid such errors it has two additional distinct tRNA(Ile)-dependent editing activities. One activity is designated as 'pretransfer' editing and involves the hydrolysis of activated Val-AMP. The other activity is designated 'posttransfer' editing and involves deacylation of mischarged Val-tRNA(Ile). The protein is Isoleucine--tRNA ligase of Bordetella bronchiseptica (strain ATCC BAA-588 / NCTC 13252 / RB50) (Alcaligenes bronchisepticus).